A 487-amino-acid polypeptide reads, in one-letter code: Protein nucleotidyltransferase YdiU (487 aa).

ATP-binding residues include Gly-90, Gly-92, Arg-93, Lys-113, Asp-125, Gly-126, Arg-176, and Arg-183. Asp-252 (proton acceptor) is an active-site residue. Residues Asn-253 and Asp-262 each contribute to the Mg(2+) site. An ATP-binding site is contributed by Asp-262.

The protein belongs to the SELO family. The cofactor is Mg(2+). Mn(2+) serves as cofactor.

The catalysed reaction is L-seryl-[protein] + ATP = 3-O-(5'-adenylyl)-L-seryl-[protein] + diphosphate. It carries out the reaction L-threonyl-[protein] + ATP = 3-O-(5'-adenylyl)-L-threonyl-[protein] + diphosphate. The enzyme catalyses L-tyrosyl-[protein] + ATP = O-(5'-adenylyl)-L-tyrosyl-[protein] + diphosphate. It catalyses the reaction L-histidyl-[protein] + UTP = N(tele)-(5'-uridylyl)-L-histidyl-[protein] + diphosphate. The catalysed reaction is L-seryl-[protein] + UTP = O-(5'-uridylyl)-L-seryl-[protein] + diphosphate. It carries out the reaction L-tyrosyl-[protein] + UTP = O-(5'-uridylyl)-L-tyrosyl-[protein] + diphosphate. Its function is as follows. Nucleotidyltransferase involved in the post-translational modification of proteins. It can catalyze the addition of adenosine monophosphate (AMP) or uridine monophosphate (UMP) to a protein, resulting in modifications known as AMPylation and UMPylation. In Pseudomonas syringae pv. syringae (strain B728a), this protein is Protein nucleotidyltransferase YdiU.